Consider the following 795-residue polypeptide: Forkhead box protein P4 (795 aa).

Residues 1 to 25 (MMVESASETIRSAPSGQNGVGSLSA) are compositionally biased toward polar residues. The tract at residues 1–62 (MMVESASETI…SGGADSNGEM (62 aa)) is disordered. Positions 36–45 (AGTAPAAGRD) are enriched in low complexity. Ser-58 and Ser-92 each carry phosphoserine. A Glycyl lysine isopeptide (Lys-Gly) (interchain with G-Cter in SUMO2) cross-link involves residue Lys-181. Disordered stretches follow at residues 233 to 252 (PQLWKGEGAPGQPAEDSGRQ) and 265 to 310 (TSFA…PLYG). The span at 292–303 (SRRDSSSHEETP) shows a compositional bias: basic and acidic residues. The segment at 312-337 (GECKWPGCETLCEDLGQFIKHLNTEH) adopts a C2H2-type zinc-finger fold. A leucine-zipper region spans residues 354–375 (VQQLEIQLAKESERLQAMMAHL). Residues 379-437 (PSEPKPFSQPVTVSADPFPDGLVHPPTSAAAPVTPLRPPGLGSASLHSGGPARRRSNDK) are disordered. Lys-383 is covalently cross-linked (Glycyl lysine isopeptide (Lys-Gly) (interchain with G-Cter in SUMO2)). The fork-head DNA-binding region spans 459 to 549 (RPPFTYASLI…PPKMTGSPTL (91 aa)). Position 546 is a phosphoserine (Ser-546). The interval 589-671 (ASSLLPLSQE…LEEDLGGEDM (83 aa)) is disordered. Over residues 609–627 (SNGSSSPPRLSPPQYSHQI) the composition is skewed to polar residues. The segment covering 628-642 (QVKEEPAEAEEDRRP) has biased composition (basic and acidic residues).

In terms of assembly, forms homodimers and heterodimers with FOXP1 and FOXP2. Dimerization is required for DNA-binding. Expressed in the adult heart, brain, spleen lung, liver, kidney and testes.

It is found in the nucleus. Its function is as follows. Transcriptional repressor that represses lung-specific expression. This Mus musculus (Mouse) protein is Forkhead box protein P4.